The primary structure comprises 455 residues: Chromosomal replication initiator protein DnaA (455 aa).

The interval 1–74 (MSEQEIWEKV…LYEAIGHEIA (74 aa)) is domain I, interacts with DnaA modulators. Residues 74–116 (APVFYTEEELKSLHTSEQKEENQPEQPAKKYTPGVDEAVIGGE) form a domain II region. Over residues 85 to 95 (SLHTSEQKEEN) the composition is skewed to basic and acidic residues. The segment at 85 to 104 (SLHTSEQKEENQPEQPAKKY) is disordered. Residues 117 to 333 (QFNTHNTFET…GALTRVLAFS (217 aa)) are domain III, AAA+ region. 4 residues coordinate ATP: Gly161, Gly163, Lys164, and Thr165. Positions 334–455 (KLQGQPITTE…ENLEKEIRNQ (122 aa)) are domain IV, binds dsDNA.

It belongs to the DnaA family. In terms of assembly, oligomerizes as a right-handed, spiral filament on DNA at oriC.

The protein resides in the cytoplasm. Functionally, plays an essential role in the initiation and regulation of chromosomal replication. ATP-DnaA binds to the origin of replication (oriC) to initiate formation of the DNA replication initiation complex once per cell cycle. Binds the DnaA box (a 9 base pair repeat at the origin) and separates the double-stranded (ds)DNA. Forms a right-handed helical filament on oriC DNA; dsDNA binds to the exterior of the filament while single-stranded (ss)DNA is stabiized in the filament's interior. The ATP-DnaA-oriC complex binds and stabilizes one strand of the AT-rich DNA unwinding element (DUE), permitting loading of DNA polymerase. After initiation quickly degrades to an ADP-DnaA complex that is not apt for DNA replication. Binds acidic phospholipids. The chain is Chromosomal replication initiator protein DnaA from Staphylococcus saprophyticus subsp. saprophyticus (strain ATCC 15305 / DSM 20229 / NCIMB 8711 / NCTC 7292 / S-41).